The primary structure comprises 111 residues: Urease subunit beta (111 aa).

The protein belongs to the urease beta subunit family. Heterotrimer of UreA (gamma), UreB (beta) and UreC (alpha) subunits. Three heterotrimers associate to form the active enzyme.

It is found in the cytoplasm. The enzyme catalyses urea + 2 H2O + H(+) = hydrogencarbonate + 2 NH4(+). Its pathway is nitrogen metabolism; urea degradation; CO(2) and NH(3) from urea (urease route): step 1/1. This is Urease subunit beta from Psychrobacter cryohalolentis (strain ATCC BAA-1226 / DSM 17306 / VKM B-2378 / K5).